The sequence spans 376 residues: Putative 12-oxophytodienoate reductase 13 (376 aa).

FMN is bound by residues proline 25–threonine 27, alanine 58, and glutamine 99. Histidine 165–histidine 168 provides a ligand contact to substrate. FMN-binding positions include arginine 217, glycine 301, and glycine 322 to arginine 323.

It belongs to the NADH:flavin oxidoreductase/NADH oxidase family. The cofactor is FMN.

In terms of biological role, putative oxophytodienoate reductase that may be involved in the biosynthesis or metabolism of oxylipin signaling molecules. This is Putative 12-oxophytodienoate reductase 13 (OPR13) from Oryza sativa subsp. japonica (Rice).